Consider the following 486-residue polypeptide: MKSLDDLDFDNRFARLGDAFSTEVLPDPIAEPRLVVASPAALALLDLPAETSDEALFAELFGGHKLWSEAEPRAMVYSGHQFGSYNPRLGDGRGLLLGEVINQAGEHWDLHLKGAGQTPYSRMGDGRAVLRSSIREFLASEALPALGIPSSRALCVIGSSTPVWREKKESAATLLRLAPSHVRFGHFEYFYYTRQHDQLKQLAAFVQEHHFADCNAAERPYAAMFRQVVERNAELIARWQAYGFCHGVMNTDNMSILGITFDYGPYAFLDDFDANHICNHSDDAGRYSFSNQVPIAHWNLAALAQALTPLVEVDELRASLDLFLPLYQAHYLDLMRRRLGLGVAAENDQALVQELLQRMQGSAVDYSLFFRRLGEETPERALASLRDDFVDREAFDRWAEAYRRRVEEEGGDQESRRRRMHAVNPLYVLRNYLAQQAIEAAEQGDYTEVRLLHQVLSRPFEEQPGMERFTRRPPDWGRHLEISCSS.

8 residues coordinate ATP: Gly90, Gly92, Arg93, Lys113, Asp125, Gly126, Arg176, and Arg183. Asp252 serves as the catalytic Proton acceptor. Residues Asn253 and Asp262 each contribute to the Mg(2+) site. Asp262 is a binding site for ATP.

Belongs to the SELO family. It depends on Mg(2+) as a cofactor. Requires Mn(2+) as cofactor.

It catalyses the reaction L-seryl-[protein] + ATP = 3-O-(5'-adenylyl)-L-seryl-[protein] + diphosphate. The enzyme catalyses L-threonyl-[protein] + ATP = 3-O-(5'-adenylyl)-L-threonyl-[protein] + diphosphate. It carries out the reaction L-tyrosyl-[protein] + ATP = O-(5'-adenylyl)-L-tyrosyl-[protein] + diphosphate. The catalysed reaction is L-histidyl-[protein] + UTP = N(tele)-(5'-uridylyl)-L-histidyl-[protein] + diphosphate. It catalyses the reaction L-seryl-[protein] + UTP = O-(5'-uridylyl)-L-seryl-[protein] + diphosphate. The enzyme catalyses L-tyrosyl-[protein] + UTP = O-(5'-uridylyl)-L-tyrosyl-[protein] + diphosphate. Its function is as follows. Nucleotidyltransferase involved in the post-translational modification of proteins. It can catalyze the addition of adenosine monophosphate (AMP) or uridine monophosphate (UMP) to a protein, resulting in modifications known as AMPylation and UMPylation. This chain is Protein nucleotidyltransferase YdiU, found in Pseudomonas aeruginosa (strain UCBPP-PA14).